Reading from the N-terminus, the 1083-residue chain is Regulator of the glycerol channel 1 (1083 aa).

Disordered regions lie at residues 1–46 (MSDY…GSSD) and 69–89 (LKNE…KENK). The span at 13–31 (GGISKQPATPGSTRSSSRN) shows a compositional bias: polar residues. Residues S136, S249, S252, S481, and S537 each carry the phosphoserine modification. Positions 495–606 (CIRVGYLLKK…DCSLKDSTDS (112 aa)) constitute a PH domain. The disordered stretch occupies residues 534–582 (DSKSPRSKNKPVVEQSDISRVNKDGTNAGSHPSSKGTQDPKLTKRRKGL). The span at 549 to 570 (SDISRVNKDGTNAGSHPSSKGT) shows a compositional bias: polar residues. 3 positions are modified to phosphoserine: S652, S765, and S813. Phosphothreonine occurs at positions 817 and 857. Phosphoserine occurs at positions 866, 879, 918, 966, 969, and 975. The interval 979–1083 (EENRTQNCSG…TVPATSASSK (105 aa)) is disordered. Polar residues-rich tracts occupy residues 983–992 (TQNCSGSRKS), 1043–1061 (LKKT…VSND), and 1071–1083 (STNT…ASSK). Phosphoserine occurs at positions 1059, 1081, and 1082.

This sequence belongs to the RGC1 family.

Its subcellular location is the cytoplasm. Positive regulator of FPS1 glycerol channel required for the glycerol efflux. This Saccharomyces cerevisiae (strain ATCC 204508 / S288c) (Baker's yeast) protein is Regulator of the glycerol channel 1 (RGC1).